A 248-amino-acid chain; its full sequence is MGLSIFLLLCVLGLSQAATPKIFNGTECGRNSQPWQVGLFEGTSLRCGGVLIDHRWVLTAAHCSGSRYWVRLGEHSLSQLDWTEQIRHSGFSVTHPGYLGASTSHEHDLRLLRLRLPVRVTSSVQPLPLPNDCATAGTECHVSGWGITNHPRNPFPDLLQCLNLSIVSHATCHGVYPGRITSNMVCAGGVPGQDACQGDSGGPLVCGGVLQGLVSWGSVGPCGQDGIPGVYTYICKYVDWIRMIMRNN.

Positions 1–17 (MGLSIFLLLCVLGLSQA) are cleaved as a signal peptide. Residues 22–246 (IFNGTECGRN…YVDWIRMIMR (225 aa)) form the Peptidase S1 domain. Asn-24 carries an N-linked (GlcNAc...) asparagine glycan. Cystine bridges form between Cys-28–Cys-161, Cys-47–Cys-63, Cys-133–Cys-235, Cys-140–Cys-206, Cys-172–Cys-186, and Cys-196–Cys-222. Catalysis depends on charge relay system residues His-62 and Asp-108. The N-linked (GlcNAc...) asparagine glycan is linked to Asn-163. Catalysis depends on Ser-200, which acts as the Charge relay system.

Belongs to the peptidase S1 family. Kallikrein subfamily.

The protein resides in the secreted. The chain is Kallikrein-12 (KLK12) from Homo sapiens (Human).